A 115-amino-acid polypeptide reads, in one-letter code: MLDVIKAIEAEQIRTDLPAFKVGDTVKVHVKIKEGTRERIQVFEGTVIKRQNGGLRETFTVRRLAYGVGVERTFPVNAPTVSKIEIVRKGKVRRAKLFYLRDRVGKAAKVKERRY.

It belongs to the bacterial ribosomal protein bL19 family.

Its function is as follows. This protein is located at the 30S-50S ribosomal subunit interface and may play a role in the structure and function of the aminoacyl-tRNA binding site. The polypeptide is Large ribosomal subunit protein bL19 (Clostridium tetani (strain Massachusetts / E88)).